A 480-amino-acid polypeptide reads, in one-letter code: Initiation-specific alpha-1,6-mannosyltransferase (480 aa).

The Cytoplasmic segment spans residues 1-15 (MSRKLSHLIATRKSK). The chain crosses the membrane as a helical; Signal-anchor for type II membrane protein span at residues 16–30 (TIVVTVLLIYSLLTF). At 31-480 (HLSNKRLLSQ…EDADKNAGHK (450 aa)) the chain is on the lumenal side. Positions 187–189 (DMD) match the DXD motif motif. N203, N281, N341, and N393 each carry an N-linked (GlcNAc...) asparagine glycan.

The protein belongs to the glycosyltransferase 32 family. It depends on Mn(2+) as a cofactor. Glycosylated.

It is found in the endoplasmic reticulum membrane. The protein resides in the golgi apparatus membrane. The catalysed reaction is Transfers an alpha-D-mannosyl residue from GDP-mannose into lipid-linked oligosaccharide, forming an alpha-(1-&gt;6)-D-mannosyl-D-mannose linkage.. Its function is as follows. Mannosyltransferase involved in outer chain elongation of asparagine-linked oligosaccharides of the type Man(9)GlcNAc(2). Adds the first alpha-1,6-mannose to the Man(8)GlcNAc(2) and Man(9)GlcNAc(2), but not Man(5)GlcNAc(2), endoplasmic reticulum intermediates. Represents the first enzymatic event required for synthesis of outer chain mannose linkages on yeast secretory proteins. Also has the potential to transfer a second alpha-1,6-mannose to the Man(8)GlcNAc(2) core oligosaccharide. The polypeptide is Initiation-specific alpha-1,6-mannosyltransferase (Saccharomyces cerevisiae (strain ATCC 204508 / S288c) (Baker's yeast)).